The chain runs to 342 residues: Holliday junction branch migration complex subunit RuvB (342 aa).

Residues 1–21 (MSVEHSPVDPSAEPPEKAEEA) are disordered. Residues 1 to 184 (MSVEHSPVDP…FGFTAQLDYY (184 aa)) form a large ATPase domain (RuvB-L) region. ATP is bound by residues leucine 23, arginine 24, glycine 65, lysine 68, threonine 69, threonine 70, 131–133 (EDF), arginine 174, tyrosine 184, and arginine 221. A Mg(2+)-binding site is contributed by threonine 69. Residues 185–255 (EVADLERIVT…GAETALDLYE (71 aa)) are small ATPAse domain (RuvB-S). Residues 258-342 (PLGLDRLDRA…PPDSSGEGLF (85 aa)) are head domain (RuvB-H). 2 residues coordinate DNA: arginine 313 and arginine 318.

The protein belongs to the RuvB family. In terms of assembly, homohexamer. Forms an RuvA(8)-RuvB(12)-Holliday junction (HJ) complex. HJ DNA is sandwiched between 2 RuvA tetramers; dsDNA enters through RuvA and exits via RuvB. An RuvB hexamer assembles on each DNA strand where it exits the tetramer. Each RuvB hexamer is contacted by two RuvA subunits (via domain III) on 2 adjacent RuvB subunits; this complex drives branch migration. In the full resolvosome a probable DNA-RuvA(4)-RuvB(12)-RuvC(2) complex forms which resolves the HJ.

The protein localises to the cytoplasm. The catalysed reaction is ATP + H2O = ADP + phosphate + H(+). The RuvA-RuvB-RuvC complex processes Holliday junction (HJ) DNA during genetic recombination and DNA repair, while the RuvA-RuvB complex plays an important role in the rescue of blocked DNA replication forks via replication fork reversal (RFR). RuvA specifically binds to HJ cruciform DNA, conferring on it an open structure. The RuvB hexamer acts as an ATP-dependent pump, pulling dsDNA into and through the RuvAB complex. RuvB forms 2 homohexamers on either side of HJ DNA bound by 1 or 2 RuvA tetramers; 4 subunits per hexamer contact DNA at a time. Coordinated motions by a converter formed by DNA-disengaged RuvB subunits stimulates ATP hydrolysis and nucleotide exchange. Immobilization of the converter enables RuvB to convert the ATP-contained energy into a lever motion, pulling 2 nucleotides of DNA out of the RuvA tetramer per ATP hydrolyzed, thus driving DNA branch migration. The RuvB motors rotate together with the DNA substrate, which together with the progressing nucleotide cycle form the mechanistic basis for DNA recombination by continuous HJ branch migration. Branch migration allows RuvC to scan DNA until it finds its consensus sequence, where it cleaves and resolves cruciform DNA. The chain is Holliday junction branch migration complex subunit RuvB from Cutibacterium acnes (strain DSM 16379 / KPA171202) (Propionibacterium acnes).